The sequence spans 98 residues: Co-chaperonin GroES 3 (98 aa).

It belongs to the GroES chaperonin family. Heptamer of 7 subunits arranged in a ring. Interacts with the chaperonin GroEL.

Its subcellular location is the cytoplasm. Functionally, together with the chaperonin GroEL, plays an essential role in assisting protein folding. The GroEL-GroES system forms a nano-cage that allows encapsulation of the non-native substrate proteins and provides a physical environment optimized to promote and accelerate protein folding. GroES binds to the apical surface of the GroEL ring, thereby capping the opening of the GroEL channel. The sequence is that of Co-chaperonin GroES 3 from Mesorhizobium japonicum (strain LMG 29417 / CECT 9101 / MAFF 303099) (Mesorhizobium loti (strain MAFF 303099)).